The chain runs to 31 residues: Cytochrome b6-f complex subunit 6 (31 aa).

Residues 4–24 traverse the membrane as a helical segment; it reads ILTYFGILFGILTITVIIFVA.

The protein belongs to the PetL family. As to quaternary structure, the 4 large subunits of the cytochrome b6-f complex are cytochrome b6, subunit IV (17 kDa polypeptide, PetD), cytochrome f and the Rieske protein, while the 4 small subunits are PetG, PetL, PetM and PetN. The complex functions as a dimer.

It is found in the plastid. It localises to the chloroplast thylakoid membrane. Its function is as follows. Component of the cytochrome b6-f complex, which mediates electron transfer between photosystem II (PSII) and photosystem I (PSI), cyclic electron flow around PSI, and state transitions. PetL is important for photoautotrophic growth as well as for electron transfer efficiency and stability of the cytochrome b6-f complex. The sequence is that of Cytochrome b6-f complex subunit 6 from Chaetosphaeridium globosum (Charophycean green alga).